A 206-amino-acid polypeptide reads, in one-letter code: Ribosome maturation factor RimP (206 aa).

This sequence belongs to the RimP family.

Its subcellular location is the cytoplasm. Its function is as follows. Required for maturation of 30S ribosomal subunits. This Paracoccus denitrificans (strain Pd 1222) protein is Ribosome maturation factor RimP.